Consider the following 51-residue polypeptide: Suberization-associated anionic peroxidase 1 (51 aa).

Position 30 (histidine 30) interacts with heme. Residue threonine 31 coordinates Ca(2+).

Belongs to the peroxidase family. Classical plant (class III) peroxidase subfamily. Heme b is required as a cofactor. Ca(2+) serves as cofactor.

The protein resides in the secreted. It catalyses the reaction 2 a phenolic donor + H2O2 = 2 a phenolic radical donor + 2 H2O. Functionally, removal of H(2)O(2), oxidation of toxic reductants, biosynthesis and degradation of lignin, suberization, auxin catabolism, response to environmental stresses such as wounding, pathogen attack and oxidative stress. These functions might be dependent on each isozyme/isoform in each plant tissue. Its function is as follows. Suggested to catalyze the deposition of the aromatic residues of suberin on the cell wall and thus play a role in cell-suberization. In Capsicum annuum (Capsicum pepper), this protein is Suberization-associated anionic peroxidase 1.